Reading from the N-terminus, the 464-residue chain is Argininosuccinate lyase (464 aa).

This sequence belongs to the lyase 1 family. Argininosuccinate lyase subfamily.

The protein resides in the cytoplasm. It carries out the reaction 2-(N(omega)-L-arginino)succinate = fumarate + L-arginine. Its pathway is amino-acid biosynthesis; L-arginine biosynthesis; L-arginine from L-ornithine and carbamoyl phosphate: step 3/3. This Streptococcus suis (strain 98HAH33) protein is Argininosuccinate lyase.